The primary structure comprises 1083 residues: Ubiquitin-protein ligase E3C (1083 aa).

Composition is skewed to basic and acidic residues over residues 1-10 and 20-40; these read MFSFEGDFKT and SRKE…RKRE. Positions 1 to 40 are disordered; the sequence is MFSFEGDFKTRPKVSLGGASRKEEKASLLHRTQEERRKRE. A cis-determinant of acceptor ubiquitin-binding region spans residues 1–60; sequence MFSFEGDFKTRPKVSLGGASRKEEKASLLHRTQEERRKREEERRRLKNAVIIQSFIRGYR. Residues 45–74 enclose the IQ domain; that stretch reads RLKNAVIIQSFIRGYRDRKQQYFIQRSAFD. The segment at 354-386 is disordered; sequence ASPTGTGCPDSTSDSEDDNEETDQPNSPEDGRV. Residues 366–376 show a composition bias toward acidic residues; the sequence is SDSEDDNEETD. Residues 744–1083 enclose the HECT domain; it reads NEPDLKKRIR…IECAAGFELS (340 aa). A Glycyl lysine isopeptide (Lys-Gly) (interchain with G-Cter in ubiquitin); by autocatalysis cross-link involves residue Lys903. Cys1051 functions as the Glycyl thioester intermediate in the catalytic mechanism.

This sequence belongs to the UBE3C family. Interacts with 26S proteasomes. Interacts (via the HECT domain) with UBE2D1 and, less efficiently, with UBE2L3. In terms of processing, autoubiquitinated; promoting its own degradation.

The catalysed reaction is S-ubiquitinyl-[E2 ubiquitin-conjugating enzyme]-L-cysteine + [acceptor protein]-L-lysine = [E2 ubiquitin-conjugating enzyme]-L-cysteine + N(6)-ubiquitinyl-[acceptor protein]-L-lysine.. It participates in protein modification; protein ubiquitination. Functionally, E3 ubiquitin-protein ligase that specifically catalyzes 'Lys-29'- and 'Lys-48'-linked polyubiquitin chains. Accepts ubiquitin from the E2 ubiquitin-conjugating enzyme UBE2D1 in the form of a thioester and then directly transfers the ubiquitin to targeted substrates. Associates with the proteasome and promotes elongation of ubiquitin chains on substrates bound to the 26S proteasome. Also catalyzes 'Lys-29'- and 'Lys-48'-linked ubiquitination of 26S proteasome subunit ADRM1/RPN13 in response to proteotoxic stress, impairing the ability of the proteasome to bind and degrade ubiquitin-conjugated proteins. Acts as a negative regulator of autophagy by mediating 'Lys-29'- and 'Lys-48'-linked ubiquitination of PIK3C3/VPS34, promoting its degradation. Can assemble unanchored poly-ubiquitin chains in either 'Lys-29'- or 'Lys-48'-linked polyubiquitin chains; with some preference for 'Lys-48' linkages. Acts as a negative regulator of type I interferon by mediating 'Lys-48'-linked ubiquitination of IRF3 and IRF7, leading to their degradation by the proteasome. Catalyzes ubiquitination and degradation of CAND2. This is Ubiquitin-protein ligase E3C from Mus musculus (Mouse).